The following is a 374-amino-acid chain: Protein STRICTOSIDINE SYNTHASE-LIKE 10 (374 aa).

The signal sequence occupies residues 1–18 (MTMMIITVFLTVIAAVLA). Residue Asn50 is glycosylated (N-linked (GlcNAc...) asparagine).

It belongs to the strictosidine synthase family.

The protein resides in the vacuole. This Arabidopsis thaliana (Mouse-ear cress) protein is Protein STRICTOSIDINE SYNTHASE-LIKE 10.